The following is a 99-amino-acid chain: Acylphosphatase-1 (99 aa).

The region spanning 9-99 is the Acylphosphatase-like domain; sequence SVDYEVFGKV…LEHSTFSICK (91 aa). Residues Arg-24 and Asn-42 contribute to the active site.

This sequence belongs to the acylphosphatase family.

The catalysed reaction is an acyl phosphate + H2O = a carboxylate + phosphate + H(+). In Xenopus laevis (African clawed frog), this protein is Acylphosphatase-1 (acyp1).